The following is a 295-amino-acid chain: Sulfotransferase 1A1 (295 aa).

Residue 48 to 53 (KSGTTW) participates in 3'-phosphoadenylyl sulfate binding. Residue 106 to 108 (KTH) participates in substrate binding. His-108 (proton acceptor) is an active-site residue. Residues Arg-130, Ser-138, Tyr-193, 227–232 (TSFKEM), and 255–259 (FMRKG) each bind 3'-phosphoadenylyl sulfate. Position 138 is a phosphoserine (Ser-138).

It belongs to the sulfotransferase 1 family. In terms of assembly, homodimer. As to expression, distal lung parenchyma.

The protein localises to the cytoplasm. The catalysed reaction is a phenol + 3'-phosphoadenylyl sulfate = an aryl sulfate + adenosine 3',5'-bisphosphate + H(+). It carries out the reaction 17beta-estradiol + 3'-phosphoadenylyl sulfate = 17beta-estradiol 3-sulfate + adenosine 3',5'-bisphosphate + H(+). The enzyme catalyses 4-ethylphenol + 3'-phosphoadenylyl sulfate = 4-ethylphenyl sulfate + adenosine 3',5'-bisphosphate + H(+). It catalyses the reaction 4-nitrophenol + 3'-phosphoadenylyl sulfate = 4-nitrophenyl sulfate + adenosine 3',5'-bisphosphate. The catalysed reaction is dopamine + 3'-phosphoadenylyl sulfate = dopamine 3-O-sulfate + adenosine 3',5'-bisphosphate + H(+). It carries out the reaction dopamine + 3'-phosphoadenylyl sulfate = dopamine 4-O-sulfate + adenosine 3',5'-bisphosphate + H(+). The enzyme catalyses 3,3',5-triiodo-L-thyronine + 3'-phosphoadenylyl sulfate = 3,3',5-triiodo-L-thyronine sulfate + adenosine 3',5'-bisphosphate + H(+). It catalyses the reaction 3,3',5'-triiodo-L-thyronine + 3'-phosphoadenylyl sulfate = 3,3',5'-triiodo-L-thyronine sulfate + adenosine 3',5'-bisphosphate + H(+). The catalysed reaction is 3,3'-diiodo-L-thyronine + 3'-phosphoadenylyl sulfate = 3,3'-diiodo-L-thyronine sulfate + adenosine 3',5'-bisphosphate + H(+). It carries out the reaction L-thyroxine + 3'-phosphoadenylyl sulfate = L-thyroxine sulfate + adenosine 3',5'-bisphosphate + H(+). In terms of biological role, sulfotransferase that utilizes 3'-phospho-5'-adenylyl sulfate (PAPS) as sulfonate donor to catalyze the sulfate conjugation of a wide variety of acceptor molecules bearing a hydroxyl or an amine group. Sulfonation increases the water solubility of most compounds, and therefore their renal excretion, but it can also result in bioactivation to form active metabolites. Displays broad substrate specificity for small phenolic compounds. Plays an important role in the sulfonation of endogenous molecules such as steroid hormones. Mediates also the metabolic activation of carcinogenic N-hydroxyarylamines leading to highly reactive intermediates capable of forming DNA adducts, potentially resulting in mutagenesis. May play a role in gut microbiota-host metabolic interaction. O-sulfonates 4-ethylphenol (4-EP), a dietary tyrosine-derived metabolite produced by gut bacteria. The product 4-EPS crosses the blood-brain barrier and may negatively regulate oligodendrocyte maturation and myelination, affecting the functional connectivity of different brain regions associated with the limbic system. Catalyzes the sulfate conjugation of dopamine. Catalyzes the sulfation of T4 (L-thyroxine/3,5,3',5'-tetraiodothyronine), T3 (3,5,3'-triiodothyronine), rT3 (3,3',5'-triiodothyronine) and 3,3'-T2 (3,3'-diiodothyronine), with a substrate preference of 3,3'-T2 &gt; rT3 &gt; T3 &gt; T4. The sequence is that of Sulfotransferase 1A1 (SULT1A1) from Bos taurus (Bovine).